Reading from the N-terminus, the 20-residue chain is Small ribosomal subunit protein bS20 (20 aa).

Belongs to the bacterial ribosomal protein bS20 family.

Binds directly to 16S ribosomal RNA. The chain is Small ribosomal subunit protein bS20 (rpsT) from Brevundimonas diminuta (Pseudomonas diminuta).